We begin with the raw amino-acid sequence, 165 residues long: UPF0303 protein BTH_I2506 (165 aa).

It belongs to the UPF0303 family.

This is UPF0303 protein BTH_I2506 from Burkholderia thailandensis (strain ATCC 700388 / DSM 13276 / CCUG 48851 / CIP 106301 / E264).